The following is a 362-amino-acid chain: 3-dehydroquinate synthase (362 aa).

NAD(+) contacts are provided by residues 71–76 (DGEQYK), 105–109 (GVVGD), 129–130 (TT), K142, K151, and 169–172 (CLKT). Zn(2+) contacts are provided by E184, H247, and H264.

Belongs to the sugar phosphate cyclases superfamily. Dehydroquinate synthase family. It depends on Co(2+) as a cofactor. Zn(2+) is required as a cofactor. The cofactor is NAD(+).

It is found in the cytoplasm. It catalyses the reaction 7-phospho-2-dehydro-3-deoxy-D-arabino-heptonate = 3-dehydroquinate + phosphate. It participates in metabolic intermediate biosynthesis; chorismate biosynthesis; chorismate from D-erythrose 4-phosphate and phosphoenolpyruvate: step 2/7. Its function is as follows. Catalyzes the conversion of 3-deoxy-D-arabino-heptulosonate 7-phosphate (DAHP) to dehydroquinate (DHQ). The protein is 3-dehydroquinate synthase of Shigella boydii serotype 18 (strain CDC 3083-94 / BS512).